Consider the following 497-residue polypeptide: Probable small intestine urate exporter (497 aa).

N-linked (GlcNAc...) asparagine glycans are attached at residues Asn-47, Asn-56, Asn-66, Asn-75, and Asn-90. 10 helical membrane passes run 149–169, 171–191, 203–223, 230–250, 292–312, 332–352, 368–388, 398–418, 431–451, and 461–481; these read SFLT…LIVL, IVQG…WVKW, IAGS…GLLC, YVFY…FPLI, LPLW…YTIM, ILSA…GLLA, KLFT…LPWV, FLVL…VNFL, LLQV…GFFI, and NVFL…LIFG.

Belongs to the major facilitator superfamily. Sodium/anion cotransporter family. In terms of tissue distribution, abundantly expressed in pancreas, liver, colon and small intestine, less in kidney. Not detected in the adrenal glands, brain, placenta, heart, testis, skeletal muscle, and lungs.

It localises to the apical cell membrane. The enzyme catalyses 3 Na(+)(out) + phosphate(out) = 3 Na(+)(in) + phosphate(in). It carries out the reaction urate(out) + n chloride(in) = urate(in) + n chloride(out). It catalyses the reaction L-thyroxine(out) = L-thyroxine(in). The catalysed reaction is 3,3',5-triiodo-L-thyronine(out) = 3,3',5-triiodo-L-thyronine(in). Its function is as follows. Acts as a membrane potential-dependent organic anion transporter, the transport requires a low concentration of chloride ions. Mediates chloride-dependent transport of urate. Mediates sodium-independent high affinity transport of thyroid hormones including L-thyroxine (T4) and 3,3',5-triiodo-L-thyronine (T3). Can actively transport inorganic phosphate into cells via Na(+) cotransport. This Homo sapiens (Human) protein is Probable small intestine urate exporter (SLC17A4).